Here is a 122-residue protein sequence, read N- to C-terminus: Large ribosomal subunit protein uL14 (122 aa).

It belongs to the universal ribosomal protein uL14 family. In terms of assembly, part of the 50S ribosomal subunit. Forms a cluster with proteins L3 and L19. In the 70S ribosome, L14 and L19 interact and together make contacts with the 16S rRNA in bridges B5 and B8.

Binds to 23S rRNA. Forms part of two intersubunit bridges in the 70S ribosome. The sequence is that of Large ribosomal subunit protein uL14 from Rickettsia typhi (strain ATCC VR-144 / Wilmington).